Reading from the N-terminus, the 388-residue chain is Pepsin A (388 aa).

Residues 1-15 (MKWLLLLGLVALSEC) form the signal peptide. Residues 16-62 (IIYKVPLVRKKSLRRNLSEHGLLKDFLKKHNRNPASKYFPQTEAPTL) constitute a propeptide, activation peptide. The 310-residue stretch at 76–385 (YFGTIGIGTP…DRANNQVGLA (310 aa)) folds into the Peptidase A1 domain. The active site involves aspartate 94. Residues cysteine 107 and cysteine 112 are joined by a disulfide bond. Serine 130 is modified (phosphoserine). The cysteines at positions 268 and 272 are disulfide-linked. The active site involves aspartate 277. A disulfide bond links cysteine 311 and cysteine 344.

The protein belongs to the peptidase A1 family.

The protein localises to the secreted. It catalyses the reaction Preferential cleavage: hydrophobic, preferably aromatic, residues in P1 and P1' positions. Cleaves 1-Phe-|-Val-2, 4-Gln-|-His-5, 13-Glu-|-Ala-14, 14-Ala-|-Leu-15, 15-Leu-|-Tyr-16, 16-Tyr-|-Leu-17, 23-Gly-|-Phe-24, 24-Phe-|-Phe-25 and 25-Phe-|-Tyr-26 bonds in the B chain of insulin.. In terms of biological role, shows particularly broad specificity; although bonds involving phenylalanine and leucine are preferred, many others are also cleaved to some extent. The protein is Pepsin A (PGA) of Macaca mulatta (Rhesus macaque).